A 211-amino-acid polypeptide reads, in one-letter code: Urease accessory protein UreG (211 aa).

8 to 15 (GPVGSGKT) contributes to the GTP binding site.

This sequence belongs to the SIMIBI class G3E GTPase family. UreG subfamily. As to quaternary structure, homodimer. UreD, UreF and UreG form a complex that acts as a GTP-hydrolysis-dependent molecular chaperone, activating the urease apoprotein by helping to assemble the nickel containing metallocenter of UreC. The UreE protein probably delivers the nickel.

The protein localises to the cytoplasm. Functionally, facilitates the functional incorporation of the urease nickel metallocenter. This process requires GTP hydrolysis, probably effectuated by UreG. The protein is Urease accessory protein UreG of Metallosphaera sedula (strain ATCC 51363 / DSM 5348 / JCM 9185 / NBRC 15509 / TH2).